The following is a 166-amino-acid chain: Short form salivary protein D7R1 (166 aa).

A signal peptide spans 1–21 (MFRKVFSVALVTCGLLVIVQA).

This sequence belongs to the PBP/GOBP family. As to quaternary structure, interacts with host coagulation factor XII (F12) (inactive and activated) (via amino acids 1-77). Interacts with host high molecular weight kininogen (KNG1) (via amino acids 402-532). As to expression, female salivary gland (at protein level).

The protein resides in the secreted. With respect to regulation, zn(2+) modulates binding to host coagulation factor XII (F12) and high molecular weight kininogen (KNG1). Functionally, salivary protein with anticoagulant activity that targets the intrinsic blood coagulation pathway in the host. Inhibits activation of the host plasma contact system by preventing the reciprocal activation of host coagulation factor XII (F12) and prekallikrein (KLKB1). Attenuates generation of bradykinin in host plasma. May bind and sequester different mediators involved in the host response, such as serotonin and histamine. The chain is Short form salivary protein D7R1 from Anopheles stephensi (Indo-Pakistan malaria mosquito).